Reading from the N-terminus, the 195-residue chain is ATP-dependent Clp protease proteolytic subunit 2 (195 aa).

Residue serine 98 is the Nucleophile of the active site. The active site involves histidine 123.

It belongs to the peptidase S14 family. In terms of assembly, fourteen ClpP subunits assemble into 2 heptameric rings which stack back to back to give a disk-like structure with a central cavity, resembling the structure of eukaryotic proteasomes.

It is found in the cytoplasm. It catalyses the reaction Hydrolysis of proteins to small peptides in the presence of ATP and magnesium. alpha-casein is the usual test substrate. In the absence of ATP, only oligopeptides shorter than five residues are hydrolyzed (such as succinyl-Leu-Tyr-|-NHMec, and Leu-Tyr-Leu-|-Tyr-Trp, in which cleavage of the -Tyr-|-Leu- and -Tyr-|-Trp bonds also occurs).. Functionally, cleaves peptides in various proteins in a process that requires ATP hydrolysis. Has a chymotrypsin-like activity. Plays a major role in the degradation of misfolded proteins. ClpXP2 is involved in the complete degradation of the Site-2 clipped anti-sigma-W factor RsiW. This results in the release of SigW and the transcription activation of the genes under the control of the sigma-W factor. This is ATP-dependent Clp protease proteolytic subunit 2 from Shouchella clausii (strain KSM-K16) (Alkalihalobacillus clausii).